A 149-amino-acid chain; its full sequence is SsrA-binding protein (149 aa).

The protein belongs to the SmpB family.

The protein resides in the cytoplasm. Functionally, required for rescue of stalled ribosomes mediated by trans-translation. Binds to transfer-messenger RNA (tmRNA), required for stable association of tmRNA with ribosomes. tmRNA and SmpB together mimic tRNA shape, replacing the anticodon stem-loop with SmpB. tmRNA is encoded by the ssrA gene; the 2 termini fold to resemble tRNA(Ala) and it encodes a 'tag peptide', a short internal open reading frame. During trans-translation Ala-aminoacylated tmRNA acts like a tRNA, entering the A-site of stalled ribosomes, displacing the stalled mRNA. The ribosome then switches to translate the ORF on the tmRNA; the nascent peptide is terminated with the 'tag peptide' encoded by the tmRNA and targeted for degradation. The ribosome is freed to recommence translation, which seems to be the essential function of trans-translation. This is SsrA-binding protein from Anaplasma marginale (strain St. Maries).